We begin with the raw amino-acid sequence, 547 residues long: Chaperonin GroEL (547 aa).

ATP-binding positions include 30 to 33 (TLGP), Lys51, 87 to 91 (DGTTT), Gly415, and Asp495.

This sequence belongs to the chaperonin (HSP60) family. In terms of assembly, forms a cylinder of 14 subunits composed of two heptameric rings stacked back-to-back. Interacts with the co-chaperonin GroES.

It is found in the cytoplasm. The catalysed reaction is ATP + H2O + a folded polypeptide = ADP + phosphate + an unfolded polypeptide.. Functionally, together with its co-chaperonin GroES, plays an essential role in assisting protein folding. The GroEL-GroES system forms a nano-cage that allows encapsulation of the non-native substrate proteins and provides a physical environment optimized to promote and accelerate protein folding. The protein is Chaperonin GroEL of Aggregatibacter actinomycetemcomitans (Actinobacillus actinomycetemcomitans).